The following is a 197-amino-acid chain: uncharacterized protein (197 aa).

A run of 6 helical transmembrane segments spans residues 11–31 (AAMV…IPLI), 50–70 (ILAI…AYLG), 79–99 (AIVA…GLFA), 108–128 (AIVA…LGIM), 136–156 (ALKG…FIGL), and 158–178 (TLQI…AFHF).

It belongs to the chromate ion transporter (CHR) (TC 2.A.51) family.

It localises to the cell membrane. This is an uncharacterized protein from Bacillus subtilis (strain 168).